The primary structure comprises 183 residues: ATP synthase subunit b, chloroplastic (183 aa).

The helical transmembrane segment at Ile20–Tyr42 threads the bilayer.

The protein belongs to the ATPase B chain family. As to quaternary structure, F-type ATPases have 2 components, F(1) - the catalytic core - and F(0) - the membrane proton channel. F(1) has five subunits: alpha(3), beta(3), gamma(1), delta(1), epsilon(1). F(0) has four main subunits: a(1), b(1), b'(1) and c(10-14). The alpha and beta chains form an alternating ring which encloses part of the gamma chain. F(1) is attached to F(0) by a central stalk formed by the gamma and epsilon chains, while a peripheral stalk is formed by the delta, b and b' chains.

It is found in the plastid. The protein localises to the chloroplast thylakoid membrane. In terms of biological role, f(1)F(0) ATP synthase produces ATP from ADP in the presence of a proton or sodium gradient. F-type ATPases consist of two structural domains, F(1) containing the extramembraneous catalytic core and F(0) containing the membrane proton channel, linked together by a central stalk and a peripheral stalk. During catalysis, ATP synthesis in the catalytic domain of F(1) is coupled via a rotary mechanism of the central stalk subunits to proton translocation. Component of the F(0) channel, it forms part of the peripheral stalk, linking F(1) to F(0). The protein is ATP synthase subunit b, chloroplastic of Euglena gracilis.